Here is a 1669-residue protein sequence, read N- to C-terminus: Collagen alpha-3(IV) chain (1669 aa).

The first 28 residues, 1 to 28 (MHSKTAPRFLVFLLLTLLLLLAASPVAS), serve as a signal peptide directing secretion. The interval 29–42 (KGCVCKGKGQCLCA) is 7S domain. The segment at 43–1436 (GTKGEKGEKG…KGNPGDRGTP (1394 aa)) is triple-helical region. Disordered stretches follow at residues 44-473 (TKGE…EPGS) and 500-1439 (PGGR…PATG). Positions 54-68 (PGSPGFPGQKGFPGP) are enriched in low complexity. A compositionally biased stretch (pro residues) spans 105 to 114 (PGLPGLPGHP). Residue asparagine 126 is glycosylated (N-linked (GlcNAc...) asparagine). The segment covering 188-200 (PGFPGPAGPPGPP) has biased composition (pro residues). Positions 202–211 (FFGLPGAMGP) are enriched in low complexity. An N-linked (GlcNAc...) asparagine glycan is attached at asparagine 253. A compositionally biased stretch (basic and acidic residues) spans 255–269 (SDFKGEKGDEGERGE). 2 stretches are compositionally biased toward low complexity: residues 279–290 (PGDSYGSEKGAP) and 382–393 (SPGLSRPGLRGP). Over residues 416 to 437 (PPGPLGCPGSPGPPGPPGPPGC) the composition is skewed to pro residues. A compositionally biased stretch (low complexity) spans 551 to 560 (NPGDPGLRGL). Composition is skewed to pro residues over residues 596 to 617 (PPGP…PPGY) and 654 to 665 (LGPPGPPGPPGQ). Residues 666–684 (AGPRGLPGLPGPVGKCDPG) are compositionally biased toward low complexity. Gly residues predominate over residues 778–787 (GTPGRGGLDG). The Cell attachment site signature appears at 830–832 (RGD). Positions 861-876 (CPGEMGPPGQKGYPGA) are enriched in low complexity. Basic and acidic residues predominate over residues 922 to 939 (KGEKGRPGAKGERGEKGK). Positions 970–985 (RGNPGLPGPKGLEGLP) are enriched in low complexity. A Cell attachment site motif is present at residues 994–996 (RGD). Over residues 1092 to 1103 (SGPAGPDGAPGS) the composition is skewed to low complexity. Positions 1128–1146 (PGPPGSTGPPGPPGLPGLP) are enriched in pro residues. The short motif at 1152-1154 (RGD) is the Cell attachment site element. Positions 1228-1248 (PGAIIPGPKGDRGLPGLRGNP) are enriched in low complexity. The span at 1250-1259 (EPGPPGPPGP) shows a compositional bias: pro residues. Residues 1304-1306 (RGD) carry the Cell attachment site motif. Over residues 1333-1343 (PVGPKGPPGPR) the composition is skewed to pro residues. Low complexity-rich tracts occupy residues 1366–1379 (QPGM…LGLP) and 1402–1429 (PAGT…LKGN). The segment at 1425–1443 (GLKGNPGDRGTPATGTRMR) is epitope recognized by Goodpasture antibodies. Residues 1444-1668 (GFIFTRHSQT…SRCQVCMKKR (225 aa)) form the Collagen IV NC1 domain. Intrachain disulfides connect cysteine 1459-cysteine 1550, cysteine 1492-cysteine 1547, cysteine 1504-cysteine 1510, cysteine 1569-cysteine 1664, cysteine 1603-cysteine 1661, and cysteine 1615-cysteine 1621. Positions 1478–1556 (NKRAHGQDLG…CTVCEGPAMA (79 aa)) are required for the anti-angiogenic activity of tumstatin. Residue methionine 1532 forms an S-Lysyl-methionine sulfilimine (Met-Lys) (interchain with K-1650) linkage. The tract at residues 1609–1627 (ASPFIECHGRGTCNYYSNS) is required for the anti-tumor cell activity of tumstatin. An S-Lysyl-methionine sulfilimine (Lys-Met) (interchain with M-1532) cross-link involves residue lysine 1650.

The protein belongs to the type IV collagen family. In terms of assembly, there are six type IV collagen isoforms, alpha 1(IV)-alpha 6(IV), each of which can form a triple helix structure with 2 other chains to generate type IV collagen network. The alpha 3(IV) chain forms a triple helical protomer with alpha 4(IV) and alpha 5(IV); this triple helical structure dimerizes through NC1-NC1 domain interactions such that the alpha 3(IV), alpha 4(IV) and alpha 5(IV) chains of one protomer connect with the alpha 5(IV), alpha 4(IV) and alpha 3(IV) chains of the opposite promoter, respectively. Interacts with ITGB3. Associates with LAMB2 at the neuromuscular junction and in GBM. Post-translationally, prolines at the third position of the tripeptide repeating unit (G-X-Y) are hydroxylated in some or all of the chains. In terms of processing, type IV collagens contain numerous cysteine residues which are involved in inter- and intramolecular disulfide bonding. 12 of these, located in the NC1 domain, are conserved in all known type IV collagens. The trimeric structure of the NC1 domains is stabilized by covalent bonds between Lys and Met residues. Post-translationally, phosphorylated. Thought to be phosphorylated by CERT, but CERT does not have kinase activity. In terms of tissue distribution, highly expressed in kidney and lung. Detected at lower levels in heart, muscle and skin.

It localises to the secreted. It is found in the extracellular space. The protein localises to the extracellular matrix. The protein resides in the basement membrane. Its function is as follows. Type IV collagen is the major structural component of glomerular basement membranes (GBM), forming a 'chicken-wire' meshwork together with laminins, proteoglycans and entactin/nidogen. Functionally, tumstatin, a cleavage fragment corresponding to the collagen alpha 3(IV) NC1 domain, possesses both anti-angiogenic and anti-tumor cell activity; these two anti-tumor properties may be regulated via RGD-independent ITGB3-mediated mechanisms. In Mus musculus (Mouse), this protein is Collagen alpha-3(IV) chain.